Consider the following 265-residue polypeptide: MTAIPIFIISDSIGETARTVIAAVNAQFPASVTLKIQRFPFITDQKTLTPILQDAHQEQAIIVSTLVNHTLQETVTQFCQAKHLTLIDLLSPLTTAISERSQTASLETPGSLRKLDEHYFHRISAMEFAVRYDDGQDPRGLLEADIVLLGVSRTSKTPLSMYLANQNYRVANLPLIPNVPLPKELFKVPAHKIIGLTMPLSTLLKIRQERLATLGLPQTTNYSNMTTVGDELAYANQIFEQLNATTINVADRSIEETASLIQTLI.

Residue 150–157 (GVSRTSKT) coordinates ADP.

Belongs to the pyruvate, phosphate/water dikinase regulatory protein family. PDRP subfamily.

It carries out the reaction N(tele)-phospho-L-histidyl/L-threonyl-[pyruvate, phosphate dikinase] + ADP = N(tele)-phospho-L-histidyl/O-phospho-L-threonyl-[pyruvate, phosphate dikinase] + AMP + H(+). The enzyme catalyses N(tele)-phospho-L-histidyl/O-phospho-L-threonyl-[pyruvate, phosphate dikinase] + phosphate + H(+) = N(tele)-phospho-L-histidyl/L-threonyl-[pyruvate, phosphate dikinase] + diphosphate. In terms of biological role, bifunctional serine/threonine kinase and phosphorylase involved in the regulation of the pyruvate, phosphate dikinase (PPDK) by catalyzing its phosphorylation/dephosphorylation. This chain is Putative pyruvate, phosphate dikinase regulatory protein 2, found in Latilactobacillus sakei subsp. sakei (strain 23K) (Lactobacillus sakei subsp. sakei).